Consider the following 32-residue polypeptide: Potassium channel toxin alpha-KTx 9.4 (32 aa).

Disulfide bonds link C3/C19, C6/C24, and C10/C26.

Expressed by the venom gland.

The protein resides in the secreted. Its function is as follows. Blocker of human voltage-gated potassium channel Kv1.1/KCNA1. This chain is Potassium channel toxin alpha-KTx 9.4, found in Hottentotta tamulus (Eastern Indian scorpion).